A 307-amino-acid chain; its full sequence is Methionyl-tRNA formyltransferase (307 aa).

108 to 111 (SLLP) is a (6S)-5,6,7,8-tetrahydrofolate binding site.

This sequence belongs to the Fmt family.

The catalysed reaction is L-methionyl-tRNA(fMet) + (6R)-10-formyltetrahydrofolate = N-formyl-L-methionyl-tRNA(fMet) + (6S)-5,6,7,8-tetrahydrofolate + H(+). In terms of biological role, attaches a formyl group to the free amino group of methionyl-tRNA(fMet). The formyl group appears to play a dual role in the initiator identity of N-formylmethionyl-tRNA by promoting its recognition by IF2 and preventing the misappropriation of this tRNA by the elongation apparatus. The chain is Methionyl-tRNA formyltransferase from Xylella fastidiosa (strain M23).